The following is a 380-amino-acid chain: Cytochrome b (380 aa).

The next 4 helical transmembrane spans lie at 34-54 (FGSLLGICLLTQILTGLLLAM), 78-99 (WLIRNLHANGASFFFICIYLHI), 114-134 (WNTGVILLLTLMATAFVGYVL), and 179-199 (FFALHFLLPFMIAGLTLIHLT). Heme b is bound by residues H84 and H98. Residues H183 and H197 each contribute to the heme b site. Residue H202 coordinates a ubiquinone. 4 helical membrane-spanning segments follow: residues 227 to 247 (LKDILGFMLLLLPLTTLALFS), 289 to 309 (LGGVLALAASVLVLFLAPFLH), 321 to 341 (ISQLLFWILVANLFILTWVGS), and 348 to 368 (FIIIGQLASLTYFTILLILFP).

It belongs to the cytochrome b family. As to quaternary structure, the cytochrome bc1 complex contains 11 subunits: 3 respiratory subunits (MT-CYB, CYC1 and UQCRFS1), 2 core proteins (UQCRC1 and UQCRC2) and 6 low-molecular weight proteins (UQCRH/QCR6, UQCRB/QCR7, UQCRQ/QCR8, UQCR10/QCR9, UQCR11/QCR10 and a cleavage product of UQCRFS1). This cytochrome bc1 complex then forms a dimer. Heme b serves as cofactor.

The protein resides in the mitochondrion inner membrane. In terms of biological role, component of the ubiquinol-cytochrome c reductase complex (complex III or cytochrome b-c1 complex) that is part of the mitochondrial respiratory chain. The b-c1 complex mediates electron transfer from ubiquinol to cytochrome c. Contributes to the generation of a proton gradient across the mitochondrial membrane that is then used for ATP synthesis. The sequence is that of Cytochrome b (MT-CYB) from Puffinus opisthomelas (Black-vented shearwater).